The following is a 256-amino-acid chain: Thiazole synthase (256 aa).

Lys95 acts as the Schiff-base intermediate with DXP in catalysis. 1-deoxy-D-xylulose 5-phosphate is bound by residues Gly156, 182-183 (AG), and 204-205 (NT).

Belongs to the ThiG family. As to quaternary structure, homotetramer. Forms heterodimers with either ThiH or ThiS.

It is found in the cytoplasm. It catalyses the reaction [ThiS sulfur-carrier protein]-C-terminal-Gly-aminoethanethioate + 2-iminoacetate + 1-deoxy-D-xylulose 5-phosphate = [ThiS sulfur-carrier protein]-C-terminal Gly-Gly + 2-[(2R,5Z)-2-carboxy-4-methylthiazol-5(2H)-ylidene]ethyl phosphate + 2 H2O + H(+). It functions in the pathway cofactor biosynthesis; thiamine diphosphate biosynthesis. Catalyzes the rearrangement of 1-deoxy-D-xylulose 5-phosphate (DXP) to produce the thiazole phosphate moiety of thiamine. Sulfur is provided by the thiocarboxylate moiety of the carrier protein ThiS. In vitro, sulfur can be provided by H(2)S. This chain is Thiazole synthase, found in Salmonella typhi.